A 398-amino-acid chain; its full sequence is Phosphoglycerate kinase (398 aa).

Substrate contacts are provided by residues 21–23, arginine 36, 59–62, arginine 119, and arginine 157; these read DFN and HLGR. Residues lysine 208, glycine 296, glutamate 327, and 354-357 each bind ATP; that span reads GGDS.

This sequence belongs to the phosphoglycerate kinase family. In terms of assembly, monomer.

It localises to the cytoplasm. It catalyses the reaction (2R)-3-phosphoglycerate + ATP = (2R)-3-phospho-glyceroyl phosphate + ADP. It participates in carbohydrate degradation; glycolysis; pyruvate from D-glyceraldehyde 3-phosphate: step 2/5. This is Phosphoglycerate kinase from Streptococcus pyogenes serotype M18 (strain MGAS8232).